The chain runs to 310 residues: Ribonuclease Z (310 aa).

Zn(2+) contacts are provided by H61, H63, D65, H66, and H139. Residue D65 is the Proton acceptor of the active site. The interval 150-175 (EDDRPGRFDRPKAEELGVPVGPKFGR) is disordered. Positions 153 to 164 (RPGRFDRPKAEE) are enriched in basic and acidic residues. Residues D210 and H268 each contribute to the Zn(2+) site.

This sequence belongs to the RNase Z family. In terms of assembly, homodimer. Zn(2+) is required as a cofactor.

The catalysed reaction is Endonucleolytic cleavage of RNA, removing extra 3' nucleotides from tRNA precursor, generating 3' termini of tRNAs. A 3'-hydroxy group is left at the tRNA terminus and a 5'-phosphoryl group is left at the trailer molecule.. Zinc phosphodiesterase, which displays some tRNA 3'-processing endonuclease activity. Probably involved in tRNA maturation, by removing a 3'-trailer from precursor tRNA. The chain is Ribonuclease Z from Halorubrum lacusprofundi (strain ATCC 49239 / DSM 5036 / JCM 8891 / ACAM 34).